We begin with the raw amino-acid sequence, 549 residues long: CDK5RAP3 protein homolog (549 aa).

Short sequence motifs (shuffled ATG8-binding motif) lie at residues 274 to 277 (IDWD), 285 to 288 (IDWD), and 333 to 336 (ISWD).

This sequence belongs to the CDK5RAP3 family. As to quaternary structure, substrate adapter component of the UFM1 ribosome E3 ligase (UREL) complex. Interacts with ATG8 family proteins.

Functionally, substrate adapter of E3 ligase complexes mediating ufmylation, the covalent attachment of the ubiquitin-like modifier UFM1 to substrate proteins, and which is involved in various processes, such as ribosome recycling and reticulophagy (also called ER-phagy). This chain is CDK5RAP3 protein homolog, found in Arabidopsis thaliana (Mouse-ear cress).